The sequence spans 318 residues: Protein-methionine-sulfoxide reductase catalytic subunit MsrP (318 aa).

Positions 1–40 (MKQLMMSDVTPEEIFNQRRQIIKSMGLGIATLGLPNIAFA) form a signal peptide, tat-type signal. Mo-molybdopterin-binding positions include asparagine 72, 75-76 (YE), cysteine 130, threonine 165, asparagine 217, arginine 222, and 233-235 (SIK).

It belongs to the MsrP family. Heterodimer of a catalytic subunit (MsrP) and a heme-binding subunit (MsrQ). Mo-molybdopterin serves as cofactor. Predicted to be exported by the Tat system. The position of the signal peptide cleavage has not been experimentally proven.

Its subcellular location is the periplasm. The catalysed reaction is L-methionyl-[protein] + a quinone + H2O = L-methionyl-(S)-S-oxide-[protein] + a quinol. It catalyses the reaction L-methionyl-[protein] + a quinone + H2O = L-methionyl-(R)-S-oxide-[protein] + a quinol. Its function is as follows. Part of the MsrPQ system that repairs oxidized periplasmic proteins containing methionine sulfoxide residues (Met-O), using respiratory chain electrons. Thus protects these proteins from oxidative-stress damage caused by reactive species of oxygen and chlorine generated by the host defense mechanisms. MsrPQ is essential for the maintenance of envelope integrity under bleach stress, rescuing a wide series of structurally unrelated periplasmic proteins from methionine oxidation. The catalytic subunit MsrP is non-stereospecific, being able to reduce both (R-) and (S-) diastereoisomers of methionine sulfoxide. The sequence is that of Protein-methionine-sulfoxide reductase catalytic subunit MsrP from Haemophilus ducreyi (strain 35000HP / ATCC 700724).